Reading from the N-terminus, the 100-residue chain is MNKGELVHAVTDKAKEQLGESITKKEVDAVISAAIDCIMEVVAEGEKVTLVGFGSFEARERKEREGRNPKTGDKMLIPATKVPAFSAGKMFKDKVAPEKK.

This sequence belongs to the bacterial histone-like protein family.

Its function is as follows. Histone-like DNA-binding protein which is capable of wrapping DNA to stabilize it, and thus to prevent its denaturation under extreme environmental conditions. The protein is DNA-binding protein HU (hup) of Synechocystis sp. (strain ATCC 27184 / PCC 6803 / Kazusa).